A 465-amino-acid polypeptide reads, in one-letter code: Chromosomal replication initiator protein DnaA (465 aa).

The domain I, interacts with DnaA modulators stretch occupies residues 1 to 87 (MLWTDCLTRL…RPGSILSSSE (87 aa)). Residues 81 to 123 (SILSSSEQPATTTAALQTAPIPQPAKGKREPEPVANTAVSSKS) are disordered. Over residues 88 to 100 (QPATTTAALQTAP) the composition is skewed to low complexity. The domain II stretch occupies residues 88–127 (QPATTTAALQTAPIPQPAKGKREPEPVANTAVSSKSSKKK). The interval 128 to 345 (LLNPQFTFSL…GALNKVVAIS (218 aa)) is domain III, AAA+ region. Gly-173, Gly-175, Lys-176, and Thr-177 together coordinate ATP. The tract at residues 346–465 (RFKGAPIDLD…YKNLLRLLQS (120 aa)) is domain IV, binds dsDNA.

It belongs to the DnaA family. Oligomerizes as a right-handed, spiral filament on DNA at oriC.

The protein localises to the cytoplasm. Plays an essential role in the initiation and regulation of chromosomal replication. ATP-DnaA binds to the origin of replication (oriC) to initiate formation of the DNA replication initiation complex once per cell cycle. Binds the DnaA box (a 9 base pair repeat at the origin) and separates the double-stranded (ds)DNA. Forms a right-handed helical filament on oriC DNA; dsDNA binds to the exterior of the filament while single-stranded (ss)DNA is stabiized in the filament's interior. The ATP-DnaA-oriC complex binds and stabilizes one strand of the AT-rich DNA unwinding element (DUE), permitting loading of DNA polymerase. After initiation quickly degrades to an ADP-DnaA complex that is not apt for DNA replication. Binds acidic phospholipids. The polypeptide is Chromosomal replication initiator protein DnaA (Acinetobacter baumannii (strain SDF)).